We begin with the raw amino-acid sequence, 157 residues long: Large ribosomal subunit protein uL15 (157 aa).

Over residues 1–13 (MKLNDLRDKDGAT) the composition is skewed to basic and acidic residues. Residues 1–39 (MKLNDLRDKDGATHSKKRLGRGIGSGSGKTAGRGVKGQK) form a disordered region. Residues 21–35 (RGIGSGSGKTAGRGV) are compositionally biased toward gly residues.

It belongs to the universal ribosomal protein uL15 family. As to quaternary structure, part of the 50S ribosomal subunit.

In terms of biological role, binds to the 23S rRNA. The sequence is that of Large ribosomal subunit protein uL15 from Mesorhizobium japonicum (strain LMG 29417 / CECT 9101 / MAFF 303099) (Mesorhizobium loti (strain MAFF 303099)).